We begin with the raw amino-acid sequence, 429 residues long: D-galactonate dehydratase family member Caci_4410 (429 aa).

The disordered stretch occupies residues 1–22 (MTDANHLLDPSGALPQTRPPWT). Aspartate 233 is a binding site for Mg(2+). Histidine 235 contacts D-arabinonate. Positions 259 and 285 each coordinate Mg(2+). D-arabinonate-binding residues include glutamate 285, arginine 306, histidine 335, and glutamate 362.

Belongs to the mandelate racemase/muconate lactonizing enzyme family. GalD subfamily.

Its function is as follows. Has no detectable activity with D-mannonate and with a panel of 70 other acid sugars (in vitro), in spite of the conservation of the residues that are expected to be important for catalytic activity and cofactor binding. May have evolved a divergent function. In Catenulispora acidiphila (strain DSM 44928 / JCM 14897 / NBRC 102108 / NRRL B-24433 / ID139908), this protein is D-galactonate dehydratase family member Caci_4410.